We begin with the raw amino-acid sequence, 598 residues long: Arginine--tRNA ligase (598 aa).

The 'HIGH' region signature appears at 131-141 (ANPTGPMHVGH). Positions 288 to 309 (KLPPPKSKKGQPPPQPQPDEEG) are disordered.

This sequence belongs to the class-I aminoacyl-tRNA synthetase family. In terms of assembly, monomer.

It localises to the cytoplasm. The enzyme catalyses tRNA(Arg) + L-arginine + ATP = L-arginyl-tRNA(Arg) + AMP + diphosphate. The chain is Arginine--tRNA ligase from Anaeromyxobacter dehalogenans (strain 2CP-1 / ATCC BAA-258).